Here is a 502-residue protein sequence, read N- to C-terminus: Protein DETOXIFICATION 55 (502 aa).

The next 12 membrane-spanning stretches (helical) occupy residues 30-50 (IWDISFPVAAMSILNYLKNMT), 61-81 (LELAGGALAIGFTNITGYSVL), 112-132 (IFLLLLASLPISLLWLNLAPL), 145-165 (VASLYCSFSLPDLLANSFLHP), 185-205 (VSVLLHLPITAFFTFYISLGV), 207-227 (GVAVSSFLTNFISLSLLLCYI), 261-283 (VWSTLVKFAVPSCIAVCLEWWWY), 298-318 (VALAAAAIVIQTTSLMYTIPT), 344-364 (ATVAVGAAVAVSVFGLVGTTV), 378-398 (VVLELTAAVIPVIGACELANC), 419-439 (INFYAFYVVGAPVAVVLAFVW), and 447-467 (CYGLLGAQLACAISILTVVYN).

This sequence belongs to the multi antimicrobial extrusion (MATE) (TC 2.A.66.1) family.

It is found in the membrane. This is Protein DETOXIFICATION 55 from Arabidopsis thaliana (Mouse-ear cress).